The primary structure comprises 1493 residues: Myosin-13 (1493 aa).

Residues 18–67 (KVGSIVWVQDPEEAWIDGEVVEVNGEDIKVQCTSGKTVVAKGSNTYPKDM) enclose the Myosin N-terminal SH3-like domain. One can recognise a Myosin motor domain in the interval 72–741 (SGVDDMTTLA…QMAELDDRRT (670 aa)). Residues 166–173 (GESGAGKT) and 219–227 (NNNSSRFGK) each bind ATP. 4 actin-binding regions span residues 504-538 (LIEK…YETL), 540-563 (DNKY…AGDV), 598-622 (FPPL…KQQL), and 622-644 (LASL…KPNN). 6 consecutive IQ domains span residues 744–773 (LGRA…AAIN), 767–796 (LRNA…EAAA), 792–821 (REAA…VTVQ), 813–842 (YIEA…ATTV), 836–865 (KTKA…AAIT), and 859–888 (LKKA…DARD). Positions 889–1057 (TVVLQAAKSM…NFLKESVLTT (169 aa)) form a coiled coil. A disordered region spans residues 1085 to 1114 (QLSGAEFTTPPRIQESGSDTKSRGSHIDPQ). Residues 1102 to 1114 (SDTKSRGSHIDPQ) are compositionally biased toward basic and acidic residues. In terms of domain architecture, Dilute spans 1161–1444 (DRLVQMIGSA…IASMTGVMTD (284 aa)).

This sequence belongs to the TRAFAC class myosin-kinesin ATPase superfamily. Myosin family. Plant myosin class XI subfamily. In terms of assembly, homodimer.

Its function is as follows. Myosin heavy chain that is required for the cell cycle-regulated transport of various organelles and proteins for their segregation. Functions by binding with its tail domain to receptor proteins on organelles and exerting force with its N-terminal motor domain against actin filaments, thereby transporting its cargo along polarized actin cables. In Arabidopsis thaliana (Mouse-ear cress), this protein is Myosin-13 (XI-G).